A 280-amino-acid chain; its full sequence is 3-hydroxyacyl-thioester dehydratase X (280 aa).

Residues 149-170 are disordered; the sequence is QRTSLSGEPKPPPQKKPKLPPP. In terms of domain architecture, MaoC-like spans 162–256; sequence QKKPKLPPPA…TAGLYVAEGD (95 aa).

This sequence belongs to the enoyl-CoA hydratase/isomerase family.

It carries out the reaction a (3R)-3-hydroxyacyl-CoA = a (2E)-enoyl-CoA + H2O. The enzyme catalyses (2E)-octenoyl-CoA + H2O = (3R)-hydroxyoctanoyl-CoA. The catalysed reaction is (3R)-3-hydroxydodecanoyl-CoA = (2E)-dodecenoyl-CoA + H2O. It catalyses the reaction (3R)-hydroxyhexadecanoyl-CoA = (2E)-hexadecenoyl-CoA + H2O. It carries out the reaction (3R)-hydroxyeicosanoyl-CoA = (2E)-eicosenoyl-CoA + H2O. The enzyme catalyses (3R)-3-hydroxybutanoyl-CoA = (2E)-butenoyl-CoA + H2O. Its function is as follows. Shows trans-enoyl-CoA hydratase/3-hydroxyacyl-CoA dehydratase activity. Displays a broad chain length specificity, with a predilection for the C8 to C12 substrates. The protein is 3-hydroxyacyl-thioester dehydratase X of Mycobacterium tuberculosis (strain ATCC 25618 / H37Rv).